Consider the following 231-residue polypeptide: Ribose-5-phosphate isomerase A (231 aa).

Substrate is bound by residues 28–31 (TGST), 83–86 (DGAD), and 96–99 (KGGG). Glu-105 acts as the Proton acceptor in catalysis. Residue Lys-123 participates in substrate binding.

Belongs to the ribose 5-phosphate isomerase family. Homodimer.

The enzyme catalyses aldehydo-D-ribose 5-phosphate = D-ribulose 5-phosphate. It participates in carbohydrate degradation; pentose phosphate pathway; D-ribose 5-phosphate from D-ribulose 5-phosphate (non-oxidative stage): step 1/1. Catalyzes the reversible conversion of ribose-5-phosphate to ribulose 5-phosphate. The chain is Ribose-5-phosphate isomerase A from Parvibaculum lavamentivorans (strain DS-1 / DSM 13023 / NCIMB 13966).